Reading from the N-terminus, the 226-residue chain is PKHD-type hydroxylase BP3529 (226 aa).

Positions 78 to 178 (KIFPPLFNRY…RISAFFWLQS (101 aa)) constitute a Fe2OG dioxygenase domain. Fe cation contacts are provided by His96, Asp98, and His159. Arg169 is a 2-oxoglutarate binding site.

The cofactor is Fe(2+). L-ascorbate is required as a cofactor.

The polypeptide is PKHD-type hydroxylase BP3529 (Bordetella pertussis (strain Tohama I / ATCC BAA-589 / NCTC 13251)).